A 269-amino-acid chain; its full sequence is Surfeit locus protein 4 (269 aa).

5 helical membrane passes run 64 to 84, 92 to 112, 179 to 199, 203 to 223, and 242 to 262; these read FLAT…CVLV, YACF…SILW, FFSI…AVGF, LAAL…NAFW, and TTSV…GVSM. A Di-lysine motif motif is present at residues 266 to 269; the sequence is KKEW.

The protein belongs to the SURF4 family.

It localises to the endoplasmic reticulum membrane. The protein resides in the endoplasmic reticulum-Golgi intermediate compartment membrane. The protein localises to the golgi apparatus membrane. Its function is as follows. Endoplasmic reticulum cargo receptor that mediates the export of lipoproteins by recruiting cargos into COPII vesicles to facilitate their secretion. This chain is Surfeit locus protein 4, found in Danio rerio (Zebrafish).